The primary structure comprises 519 residues: Na(+)/H(+) exchange regulatory cofactor NHE-RF3 (519 aa).

PDZ domains are found at residues 9–90, 134–215, and 243–323; these read ECKL…LDGD, RLCY…VDKE, and IVEM…VDKE. Ser-148, Ser-192, Ser-250, Ser-334, and Ser-348 each carry phosphoserine. The tract at residues 347–374 is disordered; that stretch reads GSVKEAPAPTPTSLEVSSPPDTTEEVDH. Residues 357 to 367 are compositionally biased toward polar residues; sequence PTSLEVSSPPD. The PDZ 4 domain occupies 378-458; it reads LCRLAKGENG…NVTLLVCGKK (81 aa). Thr-451 is modified (phosphothreonine). Positions 473–519 are disordered; that stretch reads SLADPPDTPPDSKEGIVVESKHDSHMAKERAHSTASHSSSNSEDTEM. The span at 482-504 shows a compositional bias: basic and acidic residues; the sequence is PDSKEGIVVESKHDSHMAKERAH. Ser-492, Ser-508, Ser-510, Ser-511, Ser-512, and Ser-514 each carry phosphoserine. Residues 505-519 show a composition bias toward low complexity; that stretch reads STASHSSSNSEDTEM.

It belongs to the NHER family. In terms of assembly, interacts with PDZK1IP1 and ABCC2. Binds to the C-terminal region of SLC26A3. Interacts (via PDZ domains 1 and 3) with SCARB1 (C-terminal domain). Forms a heterodimeric complex with NHERF1. Interacts with AKAP2, BCR, CFTR, SLCO1A1, SLC22A12, SLC22A4, SLC22A5, NHERF2 and SLC17A1. Component of a complex, composed of PDZK1, SYNGAP1, KLHL17 and NMDA receptors. Interacts (via PDZ1 domain) directly with KLHL17; the interaction is important for integrity of actin cytoskeleton structures in neurons. Interacts (via C-terminal PDZ domain) with SLC26A6 (via C-terminal domain). Interacts (via C-terminal PDZ domain) with SLC9A3 (via C-terminal domain). Interacts (via the first PDZ domain) with PTGIR (via non-isoprenylated C-terminus). Interacts (via PDZ domains 1 and 3) with SLC5A8 (via PDZ-binding motif); interaction increases nicotinate transport activity of SLC5A8.

It localises to the membrane. It is found in the cell membrane. Functionally, a scaffold protein that connects plasma membrane proteins and regulatory components, regulating their surface expression in epithelial cells apical domains. May be involved in the coordination of a diverse range of regulatory processes for ion transport and second messenger cascades. In complex with NHERF1, may cluster proteins that are functionally dependent in a mutual fashion and modulate the trafficking and the activity of the associated membrane proteins. May play a role in the cellular mechanisms associated with multidrug resistance through its interaction with ABCC2 and PDZK1IP1. May potentiate the CFTR chloride channel activity. Required for normal cell-surface expression of SCARB1. Plays a role in maintaining normal plasma cholesterol levels via its effects on SCARB1. Plays a role in the normal localization and function of the chloride-anion exchanger SLC26A6 to the plasma membrane in the brush border of the proximal tubule of the kidney. May be involved in the regulation of proximal tubular Na(+)-dependent inorganic phosphate cotransport therefore playing an important role in tubule function. This is Na(+)/H(+) exchange regulatory cofactor NHE-RF3 (PDZK1) from Pongo abelii (Sumatran orangutan).